The primary structure comprises 498 residues: MEEDKILTETLLSAAEEPPALPFSSVEDIPPITTVGGFVKEFNVEVKKLWYLAGPAIFMSITQYSLGAATQVFAGHISTIALAAVSVENSVIAGFSFGVMLGMGSALETLCGQAFGAGKLSMLGVYLQRSWVILNVTAVILSLLYIFAAPILAFIGQTPAISSATGIFSIYMIPQIFAYAVNYPTAKFLQSQSKIMVMAAISAVALVLHVLLTWFVIEGLQWGTAGLAVVLNASWWFIVVAQLVYIFSGTCGEAWSGFSWEAFHNLWSFVRLSLASAVMLCLEVWYLMAVILFAGYLKNAEISVAALSICMNILGWTAMIAIGMNAAVSVRVSNELGAKHPRTAKFSLLVAVITSTVIGLAISIALLIFRDKYPSLFVGDEEVIIVVKDLTPILAVSIVINNVQPVLSGVAVGAGWQAVVAYVNIVCYYVFGIPFGLLLGYKLNFGVMGIWCGMLTGTVVQTIVLTWMICRTNWDTEAAMAEGRIREWGGEVSDQLLN.

12 helical membrane passes run 64–86, 91–111, 136–156, 161–181, 197–217, 227–247, 277–297, 302–322, 349–369, 393–413, 419–439, and 447–467; these read YSLGAATQVFAGHISTIALAAVS, VIAGFSFGVMLGMGSALETLC, VTAVILSLLYIFAAPILAFIG, ISSATGIFSIYMIPQIFAYAV, VMAAISAVALVLHVLLTWFVI, LAVVLNASWWFIVVAQLVYIF, AVMLCLEVWYLMAVILFAGYL, ISVAALSICMNILGWTAMIAI, LVAVITSTVIGLAISIALLIF, ILAVSIVINNVQPVLSGVAVG, VVAYVNIVCYYVFGIPFGLLL, and VMGIWCGMLTGTVVQTIVLTW.

The protein belongs to the multi antimicrobial extrusion (MATE) (TC 2.A.66.1) family.

The protein localises to the membrane. The chain is Protein DETOXIFICATION 30 from Arabidopsis thaliana (Mouse-ear cress).